The chain runs to 1295 residues: Phosphoribosylformylglycinamidine synthase (1295 aa).

Residues 305–316 (GAATGSGGEIRD), 384–386 (TGY), and Ala-676 contribute to the ATP site. Mg(2+) is bound by residues Asp-677, Glu-716, Asn-720, and Asp-884. Ser-886 contacts ATP. The Glutamine amidotransferase type-1 domain maps to 1042-1295 (VAILREQGVN…MFRNARKHLG (254 aa)). The active-site Nucleophile is the Cys-1135. Active-site residues include His-1260 and Glu-1262.

It in the N-terminal section; belongs to the FGAMS family. In terms of assembly, monomer.

It localises to the cytoplasm. The enzyme catalyses N(2)-formyl-N(1)-(5-phospho-beta-D-ribosyl)glycinamide + L-glutamine + ATP + H2O = 2-formamido-N(1)-(5-O-phospho-beta-D-ribosyl)acetamidine + L-glutamate + ADP + phosphate + H(+). The protein operates within purine metabolism; IMP biosynthesis via de novo pathway; 5-amino-1-(5-phospho-D-ribosyl)imidazole from N(2)-formyl-N(1)-(5-phospho-D-ribosyl)glycinamide: step 1/2. Its function is as follows. Phosphoribosylformylglycinamidine synthase involved in the purines biosynthetic pathway. Catalyzes the ATP-dependent conversion of formylglycinamide ribonucleotide (FGAR) and glutamine to yield formylglycinamidine ribonucleotide (FGAM) and glutamate. This chain is Phosphoribosylformylglycinamidine synthase, found in Idiomarina loihiensis (strain ATCC BAA-735 / DSM 15497 / L2-TR).